A 208-amino-acid chain; its full sequence is FMN-dependent NADH:quinone oxidoreductase 1 (208 aa).

It belongs to the azoreductase type 1 family. Homodimer. Requires FMN as cofactor.

It carries out the reaction 2 a quinone + NADH + H(+) = 2 a 1,4-benzosemiquinone + NAD(+). The enzyme catalyses N,N-dimethyl-1,4-phenylenediamine + anthranilate + 2 NAD(+) = 2-(4-dimethylaminophenyl)diazenylbenzoate + 2 NADH + 2 H(+). Functionally, quinone reductase that provides resistance to thiol-specific stress caused by electrophilic quinones. In terms of biological role, also exhibits azoreductase activity. Catalyzes the reductive cleavage of the azo bond in aromatic azo compounds to the corresponding amines. The polypeptide is FMN-dependent NADH:quinone oxidoreductase 1 (Bacillus cereus (strain ATCC 14579 / DSM 31 / CCUG 7414 / JCM 2152 / NBRC 15305 / NCIMB 9373 / NCTC 2599 / NRRL B-3711)).